The primary structure comprises 531 residues: Putative lipase ATG15 (531 aa).

Residues 1-11 (MKPGIKISKRY) are Cytoplasmic-facing. The helical; Signal-anchor for type II membrane protein transmembrane segment at 12–31 (SARNASVITVLLLLIYLIYI) threads the bilayer. Topologically, residues 32–531 (NKETIQTKYQ…WIGICTEYGI (500 aa)) are lumenal. N178 and N207 each carry an N-linked (GlcNAc...) asparagine glycan. S340 functions as the Charge relay system in the catalytic mechanism. Residues 482-513 (VPKKHKSSSSTASSTSAETSTLTVGPSPPEKT) are disordered. Over residues 489 to 502 (SSSTASSTSAETST) the composition is skewed to low complexity.

This sequence belongs to the AB hydrolase superfamily. Lipase family. As to quaternary structure, binds to both phosphatidylinositol (PI) and phosphatidylinositol 3,5-bisphosphate (PIP2).

It is found in the endosome. The protein localises to the multivesicular body membrane. It localises to the prevacuolar compartment membrane. It catalyses the reaction a triacylglycerol + H2O = a diacylglycerol + a fatty acid + H(+). Functionally, lipase which is essential for lysis of subvacuolar cytoplasm to vacuole targeted bodies and intravacuolar autophagic bodies. Involved in the lysis of intravacuolar multivesicular body (MVB) vesicles. The intravacuolar membrane disintegration by ATG15 is critical to life span extension. This Kluyveromyces lactis (strain ATCC 8585 / CBS 2359 / DSM 70799 / NBRC 1267 / NRRL Y-1140 / WM37) (Yeast) protein is Putative lipase ATG15 (ATG15).